Consider the following 443-residue polypeptide: ATP-dependent protease ATPase subunit HslU (443 aa).

ATP contacts are provided by residues Ile-18, 60–65 (GVGKTE), Asp-256, Glu-321, and Arg-393.

It belongs to the ClpX chaperone family. HslU subfamily. As to quaternary structure, a double ring-shaped homohexamer of HslV is capped on each side by a ring-shaped HslU homohexamer. The assembly of the HslU/HslV complex is dependent on binding of ATP.

Its subcellular location is the cytoplasm. In terms of biological role, ATPase subunit of a proteasome-like degradation complex; this subunit has chaperone activity. The binding of ATP and its subsequent hydrolysis by HslU are essential for unfolding of protein substrates subsequently hydrolyzed by HslV. HslU recognizes the N-terminal part of its protein substrates and unfolds these before they are guided to HslV for hydrolysis. In Vibrio parahaemolyticus serotype O3:K6 (strain RIMD 2210633), this protein is ATP-dependent protease ATPase subunit HslU.